The primary structure comprises 83 residues: Cytochrome b559 subunit alpha (83 aa).

The chain crosses the membrane as a helical span at residues 21-35 (VIHSITIPSLFVAGW). Position 23 (His-23) interacts with heme.

Belongs to the PsbE/PsbF family. As to quaternary structure, heterodimer of an alpha subunit and a beta subunit. PSII is composed of 1 copy each of membrane proteins PsbA, PsbB, PsbC, PsbD, PsbE, PsbF, PsbH, PsbI, PsbJ, PsbK, PsbL, PsbM, PsbT, PsbX, PsbY, PsbZ, Psb30/Ycf12, at least 3 peripheral proteins of the oxygen-evolving complex and a large number of cofactors. It forms dimeric complexes. Heme b is required as a cofactor.

It is found in the plastid. The protein localises to the chloroplast thylakoid membrane. This b-type cytochrome is tightly associated with the reaction center of photosystem II (PSII). PSII is a light-driven water:plastoquinone oxidoreductase that uses light energy to abstract electrons from H(2)O, generating O(2) and a proton gradient subsequently used for ATP formation. It consists of a core antenna complex that captures photons, and an electron transfer chain that converts photonic excitation into a charge separation. This chain is Cytochrome b559 subunit alpha, found in Nephroselmis olivacea (Green alga).